A 255-amino-acid polypeptide reads, in one-letter code: D-aminoacyl-tRNA deacylase (255 aa).

The protein belongs to the DtdA deacylase family. As to quaternary structure, monomer. Zn(2+) is required as a cofactor.

It carries out the reaction a D-aminoacyl-tRNA + H2O = a tRNA + a D-alpha-amino acid + H(+). The catalysed reaction is glycyl-tRNA(Ala) + H2O = tRNA(Ala) + glycine + H(+). Its function is as follows. D-aminoacyl-tRNA deacylase with broad substrate specificity. By recycling D-aminoacyl-tRNA to D-amino acids and free tRNA molecules, this enzyme counteracts the toxicity associated with the formation of D-aminoacyl-tRNA entities in vivo. In Picrophilus torridus (strain ATCC 700027 / DSM 9790 / JCM 10055 / NBRC 100828 / KAW 2/3), this protein is D-aminoacyl-tRNA deacylase.